We begin with the raw amino-acid sequence, 317 residues long: Melanocyte-stimulating hormone receptor (317 aa).

Residues 1–37 (MPVQGSLRSLVGAVNSTPTASPHLRPATNQTEPQCLE) lie on the Extracellular side of the membrane. An N-linked (GlcNAc...) asparagine glycan is attached at N29. The chain crosses the membrane as a helical span at residues 38 to 63 (VSVPVGLFLCLGLVSLVENTLVVAVI). Topologically, residues 64–72 (AKNRNLHSP) are cytoplasmic. The chain crosses the membrane as a helical span at residues 73–93 (MYCFICCLALSDLLVSVSNVL). At 94–118 (KTAVLLLLEAGALAAQATVVQQLGN) the chain is on the extracellular side. A helical membrane pass occupies residues 119 to 140 (VINMLICSSMVSSLCFLGAIAM). Topologically, residues 141–163 (DRYISIFYALRYHSIVTLARARR) are cytoplasmic. Residues 164–183 (AIAAVWVASILSSILFFTYY) form a helical membrane-spanning segment. The Extracellular segment spans residues 184 to 191 (DRTAALLC). Residues 192 to 211 (LVVFFLAMLVLMAVLYVHML) form a helical membrane-spanning segment. The Cytoplasmic segment spans residues 212–240 (TQACQHAQGIARLHKRQHPVQQGWGLKGA). The helical transmembrane segment at 241 to 266 (ATLAVLLGVFFLCWGPLFLHLTLIAV) threads the bilayer. Over 267 to 279 (CPQHPTCNCIVKN) the chain is Extracellular. A helical membrane pass occupies residues 280 to 300 (FKLFLALIICNAIVDPLIYAF). Residues 301–317 (RSQELRKTLKEVLLFSW) lie on the Cytoplasmic side of the membrane.

It belongs to the G-protein coupled receptor 1 family. In terms of assembly, interacts with MGRN1, but does not undergo MGRN1-mediated ubiquitination; this interaction competes with GNAS-binding and thus inhibits agonist-induced cAMP production. Interacts with OPN3; the interaction results in a decrease in MC1R-mediated cAMP signaling and ultimately a decrease in melanin production in melanocytes.

It localises to the cell membrane. Receptor for MSH (alpha, beta and gamma) and ACTH. The activity of this receptor is mediated by G proteins which activate adenylate cyclase. Mediates melanogenesis, the production of eumelanin (black/brown) and phaeomelanin (red/yellow), via regulation of cAMP signaling in melanocytes. This chain is Melanocyte-stimulating hormone receptor (MC1R), found in Varecia rubra (Red ruffed lemur).